The following is a 173-amino-acid chain: Photosystem I assembly protein Ycf3 (173 aa).

TPR repeat units lie at residues 35–68, 72–105, and 120–153; these read AYIYYREGFAAQNNGDYSEALENYEESLKLEENP, GETLKNMAIIYMSNGDEDRALETYVKALDQNPKQ, and GRSAQQRGLQDESDIWFDKAADVWTKAVRLYPGG.

It belongs to the Ycf3 family.

Its subcellular location is the cellular thylakoid membrane. Its function is as follows. Essential for the assembly of the photosystem I (PSI) complex. May act as a chaperone-like factor to guide the assembly of the PSI subunits. This Prochlorococcus marinus (strain MIT 9211) protein is Photosystem I assembly protein Ycf3.